The sequence spans 241 residues: Small ribosomal subunit protein uS2 (241 aa).

The protein belongs to the universal ribosomal protein uS2 family.

This Glaesserella parasuis serovar 5 (strain SH0165) (Haemophilus parasuis) protein is Small ribosomal subunit protein uS2.